Consider the following 336-residue polypeptide: MSEIQSLTAQALADVAAAHTPDQLETLRVALLGKNGSITAQLKQLGTLPADQRKAAGEAINLARDALTTALSERKQVLETAALDARLEGERIDVTLPGRRGERGGLHPVTRTLERIVEIFARLGYELSDGPEIEDDWHNFEALNFPPHHPARAMHDTFYFGDGRLLRTHTSGVQVRYMDTAVATKSGPPLRMIAAGKVYRSDSDQTHSPMFHQVEGLLVDEHSNFADLKGTLSEFVRAFFERDFEMRFRPSYFPFVEPGAEVDIAWQQPDGSTRWLEVLGCGMVHPNVLRSVGIDPERYTGFAFGLGVERFAMLRYGVNDLRAFFENDVRFLRQFA.

Glu257 contacts Mg(2+).

Belongs to the class-II aminoacyl-tRNA synthetase family. Phe-tRNA synthetase alpha subunit type 1 subfamily. In terms of assembly, tetramer of two alpha and two beta subunits. Requires Mg(2+) as cofactor.

It is found in the cytoplasm. The catalysed reaction is tRNA(Phe) + L-phenylalanine + ATP = L-phenylalanyl-tRNA(Phe) + AMP + diphosphate + H(+). This Xanthomonas campestris pv. campestris (strain 8004) protein is Phenylalanine--tRNA ligase alpha subunit.